Here is a 414-residue protein sequence, read N- to C-terminus: CinA-like protein (414 aa).

This sequence belongs to the CinA family.

This chain is CinA-like protein, found in Citrifermentans bemidjiense (strain ATCC BAA-1014 / DSM 16622 / JCM 12645 / Bem) (Geobacter bemidjiensis).